A 276-amino-acid polypeptide reads, in one-letter code: 2-hydroxy-6-oxo-2,4-heptadienoate hydrolase (276 aa).

The region spanning 28–259 (NPVVLVHGSG…GRCGHWVQIE (232 aa)) is the AB hydrolase-1 domain. Residues serine 105, aspartate 226, and histidine 254 contribute to the active site.

Belongs to the DmpD/TodF/XylF esterase family.

The enzyme catalyses (2Z,4E)-2-hydroxy-6-oxohepta-2,4-dienoate + H2O = (2Z)-2-hydroxypenta-2,4-dienoate + acetate + H(+). The protein operates within xenobiotic degradation; toluene degradation. In terms of biological role, catalyzes the hydrolysis of 2-hydroxy-6-oxohepta-2,4-dienoate into 2-hydroxypenta-2,4-dienoate and acetate. This Pseudomonas putida (strain ATCC 700007 / DSM 6899 / JCM 31910 / BCRC 17059 / LMG 24140 / F1) protein is 2-hydroxy-6-oxo-2,4-heptadienoate hydrolase (todF).